Here is a 141-residue protein sequence, read N- to C-terminus: Transcriptional regulator MraZ (141 aa).

SpoVT-AbrB domains follow at residues 5 to 47 (TFNL…KPAD) and 76 to 119 (ANLV…DKVQ).

The protein belongs to the MraZ family. Forms oligomers.

The protein localises to the cytoplasm. It is found in the nucleoid. This Mycoplasma genitalium (strain ATCC 33530 / DSM 19775 / NCTC 10195 / G37) (Mycoplasmoides genitalium) protein is Transcriptional regulator MraZ.